The sequence spans 377 residues: D-alanine--D-alanine ligase (377 aa).

In terms of domain architecture, ATP-grasp spans 137–346 (KELMTVNGIR…RSQQAEKLIQ (210 aa)). An ATP-binding site is contributed by 167-222 (SKQLGEVVFVKAANQGSSVGVSRVTNAEEYENALRDSFQYDEKLLVEKAVESPTEL). Residues D300, E313, and N315 each contribute to the Mg(2+) site.

It belongs to the D-alanine--D-alanine ligase family. Mg(2+) is required as a cofactor. Requires Mn(2+) as cofactor.

It is found in the cytoplasm. The enzyme catalyses 2 D-alanine + ATP = D-alanyl-D-alanine + ADP + phosphate + H(+). Its pathway is cell wall biogenesis; peptidoglycan biosynthesis. Cell wall formation. The protein is D-alanine--D-alanine ligase of Oenococcus oeni (strain ATCC BAA-331 / PSU-1).